The following is a 401-amino-acid chain: Elongation factor Tu, apicoplast (401 aa).

The 197-residue stretch at 10–206 (KPHINIGTIG…ALDSYIPLPK (197 aa)) folds into the tr-type G domain. Positions 19 to 26 (GHVDHGKT) are G1. Residue 19–26 (GHVDHGKT) participates in GTP binding. Thr26 contributes to the Mg(2+) binding site. Residues 60 to 64 (GITIK) form a G2 region. The interval 81-84 (DCPG) is G3. Residues 81 to 85 (DCPGH) and 136 to 139 (NKID) contribute to the GTP site. Residues 136–139 (NKID) form a G4 region. Residues 173 to 175 (SAL) form a G5 region.

This sequence belongs to the TRAFAC class translation factor GTPase superfamily. Classic translation factor GTPase family. EF-Tu/EF-1A subfamily. Monomer.

The protein localises to the plastid. Its subcellular location is the apicoplast. The catalysed reaction is GTP + H2O = GDP + phosphate + H(+). Its function is as follows. GTP hydrolase that promotes the GTP-dependent binding of aminoacyl-tRNA to the A-site of ribosomes during protein biosynthesis. The protein is Elongation factor Tu, apicoplast (tufA) of Toxoplasma gondii.